A 484-amino-acid polypeptide reads, in one-letter code: Rho guanine nucleotide exchange factor 35 (484 aa).

The interval 139 to 418 is disordered; sequence FSSDLGSEEE…ALIAPEDSPH (280 aa). Ser-184 carries the post-translational modification Phosphoserine. Residues 217-237 are compositionally biased toward low complexity; sequence ESQGLLHPQEVQVLEEQGQQE. The span at 266 to 278 shows a compositional bias: basic and acidic residues; it reads NDEKGEQKQKQEQ. A compositionally biased stretch (acidic residues) spans 299–309; the sequence is GLNDGEWEQED. 2 stretches are compositionally biased toward basic and acidic residues: residues 323 to 368 and 394 to 404; these read GEER…KEKG and RSREEENEHHG.

This chain is Rho guanine nucleotide exchange factor 35 (ARHGEF35), found in Homo sapiens (Human).